The primary structure comprises 316 residues: Oligopeptide transport system permease protein AppB (316 aa).

Transmembrane regions (helical) follow at residues 10–30 (LMSI…MKAA), 100–120 (LLLM…FGVL), 138–158 (FIGL…VLSV), 177–197 (IFDR…ADMA), 240–260 (LPVI…SVVV), and 290–310 (VISA…YAIV). The ABC transmembrane type-1 domain occupies 96-303 (LPNTLLLMLV…VLVVVGNLIA (208 aa)).

It belongs to the binding-protein-dependent transport system permease family. OppBC subfamily.

The protein resides in the cell membrane. Functionally, this protein is a component of an oligopeptide permease, a binding protein-dependent transport system. This APP system can completely substitute for the OPP system in both sporulation and genetic competence, though, unlike OPP, is incapable of transporting tripeptides. Probably responsible for the translocation of the substrate across the membrane. The sequence is that of Oligopeptide transport system permease protein AppB (appB) from Bacillus subtilis (strain 168).